Consider the following 174-residue polypeptide: Gamma-crystallin C (174 aa).

2 consecutive Beta/gamma crystallin 'Greek key' domains span residues 2–40 (GKIT…RVDS) and 41–83 (GCWM…RLIP). An S-methylcysteine modification is found at C23. The connecting peptide stretch occupies residues 84 to 87 (HTGS). Beta/gamma crystallin 'Greek key' domains lie at 88-128 (HRMR…HVLE) and 129-171 (GCWV…RRVV).

Belongs to the beta/gamma-crystallin family.

Its function is as follows. Crystallins are the dominant structural components of the vertebrate eye lens. The chain is Gamma-crystallin C (Crygc) from Rattus norvegicus (Rat).